The following is a 380-amino-acid chain: Methylthioribose-1-phosphate isomerase (380 aa).

Residue D257 is the Proton donor of the active site.

Belongs to the eIF-2B alpha/beta/delta subunits family. MtnA subfamily.

Its subcellular location is the cytoplasm. It is found in the nucleus. It carries out the reaction 5-(methylsulfanyl)-alpha-D-ribose 1-phosphate = 5-(methylsulfanyl)-D-ribulose 1-phosphate. It functions in the pathway amino-acid biosynthesis; L-methionine biosynthesis via salvage pathway; L-methionine from S-methyl-5-thio-alpha-D-ribose 1-phosphate: step 1/6. In terms of biological role, catalyzes the interconversion of methylthioribose-1-phosphate (MTR-1-P) into methylthioribulose-1-phosphate (MTRu-1-P). The chain is Methylthioribose-1-phosphate isomerase from Naegleria gruberi (Amoeba).